The following is a 293-amino-acid chain: Probable rRNA-processing protein EBP2 homolog (293 aa).

The span at 1–37 shows a compositional bias: acidic residues; that stretch reads MSLEEDIVSDDEMNMIDEDDATDSEAESLSDSDTENE. Disordered stretches follow at residues 1–45 and 150–293; these read MSLE…LAEP and IEES…RQKR. A coiled-coil region spans residues 135–190; it reads HMEKVKSRLLHEKKQIEESEERRKARDNKRMAKEVQSQKMKERAKEKKDNIESVKK. Basic and acidic residues-rich tracts occupy residues 150–167, 173–189, and 247–256; these read IEESEERRKARDNKRMAK, KMKERAKEKKDNIESVK, and KKREFRDSKF. Positions 265 to 275 are enriched in polar residues; sequence SKQNTAETTND.

This sequence belongs to the EBP2 family. Interacts with NSN1.

It is found in the nucleus. The protein resides in the nucleolus. Required for the processing of the 27S pre-rRNA. Plays an important role in plant growth and senescence by modulating ribosome biogenesis in nucleolus. Associates with ribosomes. This chain is Probable rRNA-processing protein EBP2 homolog, found in Arabidopsis thaliana (Mouse-ear cress).